We begin with the raw amino-acid sequence, 102 residues long: PE family immunomodulator PE5 (102 aa).

Positions 3–92 (LRVVPEGLAA…GASYLAGDAA (90 aa)) constitute a PE domain.

This sequence belongs to the mycobacterial PE family.

It localises to the secreted. It is found in the cell envelope. The protein resides in the cell surface. Important for the siderophore-mediated iron-acquisition function of ESX-3. May play a pivotal role in the evasion of host immune response by M.tuberculosis. Mediates production of IL-10 via activation of the p38 and ERK1/2 mitogen-activated protein kinase (MAPK) signaling pathways. This is PE family immunomodulator PE5 from Mycobacterium tuberculosis (strain ATCC 25618 / H37Rv).